The primary structure comprises 178 residues: PRA1 family protein 2 (178 aa).

Residues 1-41 (MSEVRLPPLRALDDFVLGSARLAAPDPGDPQRWCHRVINNL) are Cytoplasmic-facing. The helical transmembrane segment at 42 to 62 (LYYQTNYLLCFGISLALAGYI) threads the bilayer. Residues 63–64 (RP) are Extracellular-facing. Residues 65–85 (LHTLLSALVVVVALGVLVWAA) form a helical membrane-spanning segment. The Cytoplasmic portion of the chain corresponds to 86-96 (ETRAAVRRCRR). Residues 97–119 (SHPAACLAAVLAISLFILWAVGG) traverse the membrane as a helical segment. Residues 120–122 (AFT) lie on the Extracellular side of the membrane. A helical membrane pass occupies residues 123–140 (FLLSITAPVFLILLHASL). Residues 141–178 (RLRNLKNKIENKIESIGLKRTPMGLLLEALGQEQEAGS) lie on the Cytoplasmic side of the membrane.

It belongs to the PRA1 family. Interacts with CCR5 and GDE1.

Its subcellular location is the endosome membrane. Functionally, may be involved in ER/Golgi transport and vesicular traffic. Plays a proapoptotic role in cerulenin-induced neuroblastoma apoptosis. The protein is PRA1 family protein 2 (Praf2) of Mus musculus (Mouse).